We begin with the raw amino-acid sequence, 833 residues long: Leucine--tRNA ligase (833 aa).

Positions 41-52 match the 'HIGH' region motif; that stretch reads PYPSGAGLHVGH. A 'KMSKS' region motif is present at residues 610-614; that stretch reads KMSKS. ATP is bound at residue lysine 613.

Belongs to the class-I aminoacyl-tRNA synthetase family.

The protein resides in the cytoplasm. The enzyme catalyses tRNA(Leu) + L-leucine + ATP = L-leucyl-tRNA(Leu) + AMP + diphosphate. This Streptococcus pyogenes serotype M3 (strain ATCC BAA-595 / MGAS315) protein is Leucine--tRNA ligase.